Reading from the N-terminus, the 424-residue chain is UPF0229 protein ECA2349 (424 aa).

The segment at 53 to 111 (SIPNADINEPMFHQGRGGHRHRVHPGNDHFVQNDKIERPQGGGGSGSGQGDASKDGEGD) is disordered. Basic and acidic residues predominate over residues 77–90 (PGNDHFVQNDKIER). A compositionally biased stretch (gly residues) spans 92-101 (QGGGGSGSGQ).

It belongs to the UPF0229 family.

This is UPF0229 protein ECA2349 from Pectobacterium atrosepticum (strain SCRI 1043 / ATCC BAA-672) (Erwinia carotovora subsp. atroseptica).